A 298-amino-acid polypeptide reads, in one-letter code: N-acetylmuramic acid 6-phosphate etherase (298 aa).

Positions 55-218 (IHAQVSGGGR…STGLMIKSGK (164 aa)) constitute an SIS domain. The Proton donor role is filled by E83. Residue E114 is part of the active site.

Belongs to the GCKR-like family. MurNAc-6-P etherase subfamily. As to quaternary structure, homodimer.

It catalyses the reaction N-acetyl-D-muramate 6-phosphate + H2O = N-acetyl-D-glucosamine 6-phosphate + (R)-lactate. It participates in amino-sugar metabolism; 1,6-anhydro-N-acetylmuramate degradation. The protein operates within amino-sugar metabolism; N-acetylmuramate degradation. It functions in the pathway cell wall biogenesis; peptidoglycan recycling. In terms of biological role, specifically catalyzes the cleavage of the D-lactyl ether substituent of MurNAc 6-phosphate, producing GlcNAc 6-phosphate and D-lactate. Together with AnmK, is also required for the utilization of anhydro-N-acetylmuramic acid (anhMurNAc) either imported from the medium or derived from its own cell wall murein, and thus plays a role in cell wall recycling. The sequence is that of N-acetylmuramic acid 6-phosphate etherase from Escherichia coli O8 (strain IAI1).